The chain runs to 518 residues: Bifunctional purine biosynthesis protein PurH (518 aa).

One can recognise an MGS-like domain in the interval 1–144; that stretch reads MSKRALISVS…KNHAAVTVVC (144 aa).

Belongs to the PurH family.

It catalyses the reaction (6R)-10-formyltetrahydrofolate + 5-amino-1-(5-phospho-beta-D-ribosyl)imidazole-4-carboxamide = 5-formamido-1-(5-phospho-D-ribosyl)imidazole-4-carboxamide + (6S)-5,6,7,8-tetrahydrofolate. It carries out the reaction IMP + H2O = 5-formamido-1-(5-phospho-D-ribosyl)imidazole-4-carboxamide. The protein operates within purine metabolism; IMP biosynthesis via de novo pathway; 5-formamido-1-(5-phospho-D-ribosyl)imidazole-4-carboxamide from 5-amino-1-(5-phospho-D-ribosyl)imidazole-4-carboxamide (10-formyl THF route): step 1/1. It functions in the pathway purine metabolism; IMP biosynthesis via de novo pathway; IMP from 5-formamido-1-(5-phospho-D-ribosyl)imidazole-4-carboxamide: step 1/1. In Lactococcus lactis subsp. cremoris (strain SK11), this protein is Bifunctional purine biosynthesis protein PurH.